A 394-amino-acid polypeptide reads, in one-letter code: MAKAKFERTKPHVNIGTIGHVDHGKTSLTAAITIVLAKTGGAQATAYDQIDAAPEEKERGITISTAHVEYETKNRHYAHVDCPGHADYVKNMITGAAQMDGAILVVSAADGPMPQTREHILLAKQVGVPAMVVFLNKVDMVDDPDLLELVEMEVRELLSKYGFPGDEIPIIKGSALQALEGKPEGEEAINELMDAVDSYIPQPVRATDKPFLMPIEDVFSISGRGTVVTGRVESGIIKVGDEIEIVGLKDTQKTTCTGVEMFRKLLDEGQAGDNVGILLRGTKREEVERGQVLAKPGSIKPHDKFEAEVYVLSKEEGGRHTPFTNDYRPQFYFRTTDVTGTIKLPADKQMVMPGDNATFTVELIKPIAMQEGLKFSIREGGRTVGAGVVTKINN.

One can recognise a tr-type G domain in the interval 10-204; the sequence is KPHVNIGTIG…AVDSYIPQPV (195 aa). The G1 stretch occupies residues 19-26; it reads GHVDHGKT. 19–26 contacts GTP; that stretch reads GHVDHGKT. T26 serves as a coordination point for Mg(2+). The tract at residues 60–64 is G2; that stretch reads GITIS. A G3 region spans residues 81–84; sequence DCPG. GTP-binding positions include 81–85 and 136–139; these read DCPGH and NKVD. The G4 stretch occupies residues 136 to 139; the sequence is NKVD. Residues 174–176 are G5; that stretch reads SAL.

The protein belongs to the TRAFAC class translation factor GTPase superfamily. Classic translation factor GTPase family. EF-Tu/EF-1A subfamily. As to quaternary structure, monomer.

The protein resides in the cytoplasm. It carries out the reaction GTP + H2O = GDP + phosphate + H(+). Functionally, GTP hydrolase that promotes the GTP-dependent binding of aminoacyl-tRNA to the A-site of ribosomes during protein biosynthesis. The polypeptide is Elongation factor Tu (Rickettsia massiliae (strain Mtu5)).